The chain runs to 152 residues: MTSTLNTLKSNTGSRKKKLRKGRGIAAGQGASCGFGMRGQKSRSGRPTRPGFEGGQMPLYRRVPKLKHFEIINQKNFSIVNLSKLSEFKESEVVNIDSLVKKKLLFKPKFPLKILGNGEVKVKLKVQAHAFTKVAKEKIEAAGGSCEIINNK.

Residues 1-12 show a composition bias toward polar residues; the sequence is MTSTLNTLKSNT. The segment at 1–57 is disordered; the sequence is MTSTLNTLKSNTGSRKKKLRKGRGIAAGQGASCGFGMRGQKSRSGRPTRPGFEGGQM. Basic residues predominate over residues 14–23; the sequence is SRKKKLRKGR. Residues 25–37 show a composition bias toward gly residues; that stretch reads IAAGQGASCGFGM.

It belongs to the universal ribosomal protein uL15 family. As to quaternary structure, part of the 50S ribosomal subunit.

Binds to the 23S rRNA. This is Large ribosomal subunit protein uL15 from Prochlorococcus marinus subsp. pastoris (strain CCMP1986 / NIES-2087 / MED4).